Consider the following 147-residue polypeptide: Hemoglobin subunit beta (147 aa).

One can recognise a Globin domain in the interval 2–147 (DWTDAERAAI…VVSALGRQYH (146 aa)). Heme b-binding residues include histidine 63 and histidine 92.

The protein belongs to the globin family. In terms of assembly, heterotetramer of two alpha chains and two beta chains. Red blood cells.

Its function is as follows. Involved in oxygen transport from gills to the various peripheral tissues. In Leiostomus xanthurus (Spot), this protein is Hemoglobin subunit beta (hbb).